Consider the following 787-residue polypeptide: Replication origin-binding protein (787 aa).

The Helicase ATP-binding domain maps to 39–195; the sequence is HFKTFSEQIK…SLCMPHFKSA (157 aa). ATP is bound at residue 52–59; sequence APMGSGKT.

This sequence belongs to the herpesviridae OriBP family.

Probably involved in DNA replication. Binds the origin of replication (ori). This chain is Replication origin-binding protein (U73), found in Human herpesvirus 7 (strain JI) (HHV-7).